The sequence spans 486 residues: LON peptidase N-terminal domain and RING finger protein C14F5.10c (486 aa).

Residues 169-207 (CQICFGMLYDPVVSPCGHTFCGPCLMQALTQSPQCPTCR) form an RING-type zinc finger. The region spanning 250-472 (ESWLPLFISM…LVLIWLTQLQ (223 aa)) is the Lon N-terminal domain.

The chain is LON peptidase N-terminal domain and RING finger protein C14F5.10c from Schizosaccharomyces pombe (strain 972 / ATCC 24843) (Fission yeast).